Consider the following 170-residue polypeptide: Protein-lysine myristoyltransferase HlyC (170 aa).

Active-site residues include H23 and D92. Residue H151 coordinates heme.

Belongs to the RTX toxin acyltransferase family. Monomer. In terms of processing, proteolytically cleaved by the protease systems ClpAP, ClpXP and FtsH, leading to its degradation.

Its subcellular location is the cytoplasm. The catalysed reaction is tetradecanoyl-[ACP] + L-lysyl-[protein] = N(6)-tetradecanoyl-L-lysyl-[protein] + holo-[ACP] + H(+). With respect to regulation, the acyltransferase activity is inhibited by heme. Its function is as follows. Protein-lysine myristoyltransferase that catalyzes myristoylation of the protoxin (HlyA) at two internal lysine residues, thereby converting it to the active toxin. The chain is Protein-lysine myristoyltransferase HlyC from Escherichia coli.